A 358-amino-acid chain; its full sequence is MMNEEFKKRFDQYKNGEMSDQEMTAFEEELEKLEVYQELIDSELEDDNDWDLSISPEKQKAILAYGKRKSYLRISVLAVISTLMILPLCTLGSYLYYGMGGKHSTGNEFMETAAVTVALTMPNVLVDTSGLKSQVKLFGMNTEFPLQKQIGTKTAAVGNERVEMFYNKVKAPAVNYYDLEVNKTGHYFTHPSNKSEQTTAKAEKTLSTLPEGTVSEVYLSYDRAYPTKDVYNKFKGYDVSFLWNAIETEKNTNKTASTEPLGYPGKDSKFLAALNTKGKSNGDQFINALKFMSKHEKWAQVISKRKDLNVDNRLDYVEKNGVNVYGSVVTGPTKEIQRMLKNKSVKSANVGEVELWNW.

The helical transmembrane segment at 74–96 threads the bilayer; the sequence is ISVLAVISTLMILPLCTLGSYLY.

The N-terminus of YhdL interacts with sigma-M. YhdL interacts specifically with YhdK.

The protein resides in the membrane. The polypeptide is Probable anti-sigma-M factor YhdL (yhdL) (Bacillus subtilis (strain 168)).